The primary structure comprises 266 residues: UPF0246 protein PHZ_c0561 (266 aa).

A disordered region spans residues 245-266 (DEEFTFARPQPPPPAASRNKED).

Belongs to the UPF0246 family.

This chain is UPF0246 protein PHZ_c0561, found in Phenylobacterium zucineum (strain HLK1).